The following is a 156-amino-acid chain: Phosphopantetheine adenylyltransferase (156 aa).

A substrate-binding site is contributed by Thr9. ATP-binding positions include 9–10 (TF) and His17. Substrate-binding residues include Lys41, Leu73, and Arg87. ATP contacts are provided by residues 88-90 (GVR), Glu98, and 123-129 (WVFVSST).

This sequence belongs to the bacterial CoaD family. In terms of assembly, homohexamer. Mg(2+) serves as cofactor.

It localises to the cytoplasm. It carries out the reaction (R)-4'-phosphopantetheine + ATP + H(+) = 3'-dephospho-CoA + diphosphate. It functions in the pathway cofactor biosynthesis; coenzyme A biosynthesis; CoA from (R)-pantothenate: step 4/5. Reversibly transfers an adenylyl group from ATP to 4'-phosphopantetheine, yielding dephospho-CoA (dPCoA) and pyrophosphate. The polypeptide is Phosphopantetheine adenylyltransferase (Haemophilus influenzae (strain PittEE)).